We begin with the raw amino-acid sequence, 393 residues long: L-methionine gamma-lyase (393 aa).

Residues 63 to 65 and 93 to 94 each bind pyridoxal 5'-phosphate; these read YQR and GM. Residue Tyr119 coordinates L-homocysteine. Position 206–208 (206–208) interacts with pyridoxal 5'-phosphate; the sequence is SAT. Position 209 is an N6-(pyridoxal phosphate)lysine (Lys209). Arg367 is a binding site for L-homocysteine. Arg367 is a binding site for L-methionine.

It belongs to the trans-sulfuration enzymes family. L-methionine gamma-lyase subfamily. In terms of assembly, homotetramer. Pyridoxal 5'-phosphate serves as cofactor.

The catalysed reaction is L-methionine + H2O = methanethiol + 2-oxobutanoate + NH4(+). The enzyme catalyses L-homocysteine + H2O = 2-oxobutanoate + hydrogen sulfide + NH4(+) + H(+). Its function is as follows. Catalyzes the alpha,gamma-elimination of L-methionine to produce methanethiol, 2-oxobutanoate and ammonia. Is also able to catalyze the alpha,gamma-elimination of L-homocysteine. The polypeptide is L-methionine gamma-lyase (Brevibacterium sandarakinum).